The primary structure comprises 246 residues: UDP-N-acetyl-D-mannosaminuronic acid transferase (246 aa).

The protein belongs to the glycosyltransferase 26 family.

The enzyme catalyses UDP-N-acetyl-alpha-D-mannosaminouronate + N-acetyl-alpha-D-glucosaminyl-di-trans,octa-cis-undecaprenyl diphosphate = beta-D-ManNAcA-(1-&gt;4)-alpha-D-GlcNAc-di-trans,octa-cis-undecaprenyl diphosphate + UDP + H(+). Its pathway is bacterial outer membrane biogenesis; enterobacterial common antigen biosynthesis. Its function is as follows. Catalyzes the synthesis of Und-PP-GlcNAc-ManNAcA (Lipid II), the second lipid-linked intermediate involved in enterobacterial common antigen (ECA) synthesis. In Klebsiella pneumoniae (strain 342), this protein is UDP-N-acetyl-D-mannosaminuronic acid transferase.